A 489-amino-acid polypeptide reads, in one-letter code: Lysine--tRNA ligase (489 aa).

Mg(2+) is bound by residues E399 and E406.

Belongs to the class-II aminoacyl-tRNA synthetase family. As to quaternary structure, homodimer. Mg(2+) serves as cofactor.

Its subcellular location is the cytoplasm. The enzyme catalyses tRNA(Lys) + L-lysine + ATP = L-lysyl-tRNA(Lys) + AMP + diphosphate. The chain is Lysine--tRNA ligase (lysS) from Mycoplasma pneumoniae (strain ATCC 29342 / M129 / Subtype 1) (Mycoplasmoides pneumoniae).